Here is a 55-residue protein sequence, read N- to C-terminus: Ferredoxin (55 aa).

4Fe-4S ferredoxin-type domains are found at residues 2 to 27 and 28 to 55; these read YKIT…SESD and AVRV…IVEG. [4Fe-4S] cluster-binding residues include cysteine 8, cysteine 11, cysteine 14, cysteine 18, cysteine 37, cysteine 40, cysteine 43, and cysteine 47.

[4Fe-4S] cluster is required as a cofactor.

In terms of biological role, ferredoxins are iron-sulfur proteins that transfer electrons in a wide variety of metabolic reactions. The protein is Ferredoxin of Clostridium sp. (strain M-E).